The primary structure comprises 258 residues: Tetraspanin-18B (258 aa).

The Cytoplasmic portion of the chain corresponds to Met1 to Met25. The chain crosses the membrane as a helical span at residues Phe26–Val46. At Val47–Pro61 the chain is on the extracellular side. A helical membrane pass occupies residues Leu62–Phe82. The Cytoplasmic segment spans residues Leu83–Cys94. Residues Leu95–Ile115 form a helical membrane-spanning segment. The Extracellular portion of the chain corresponds to Leu116–Tyr228. The N-linked (GlcNAc...) asparagine glycan is linked to Asn141. The chain crosses the membrane as a helical span at residues Ile229–Phe249. Residues Ala250–Gln258 lie on the Cytoplasmic side of the membrane.

It belongs to the tetraspanin (TM4SF) family.

The protein resides in the membrane. Its function is as follows. May regulate angiogenesis through KDR/VEGFR2 and NOTCH1 pathways. The sequence is that of Tetraspanin-18B (tspan18b) from Danio rerio (Zebrafish).